We begin with the raw amino-acid sequence, 171 residues long: Large ribosomal subunit protein bL17 (171 aa).

The segment covering 140–152 (KREIQTKAREEKR) has biased composition (basic and acidic residues). Residues 140-171 (KREIQTKAREEKRATRKSNSAPVSKETTSKKK) are disordered. The span at 156-165 (KSNSAPVSKE) shows a compositional bias: polar residues.

Belongs to the bacterial ribosomal protein bL17 family. In terms of assembly, part of the 50S ribosomal subunit. Contacts protein L32.

The protein is Large ribosomal subunit protein bL17 of Leptospira interrogans serogroup Icterohaemorrhagiae serovar copenhageni (strain Fiocruz L1-130).